The following is a 261-amino-acid chain: Cytochrome c oxidase subunit 3 (261 aa).

The Mitochondrial matrix portion of the chain corresponds to 1-15 (MTHQAHAYHMVDPSP). A helical transmembrane segment spans residues 16 to 34 (WPLTGAVAALLMTSGLAVW). Residues 35–40 (FHFHST) lie on the Mitochondrial intermembrane side of the membrane. Residues 41–66 (TLMALGTVLLLLTMYQWWRDIIREGT) traverse the membrane as a helical segment. The Mitochondrial matrix portion of the chain corresponds to 67–72 (FQGHHT). The chain crosses the membrane as a helical span at residues 73–105 (PPVQKGLRYGMILFITSEVFFFLGFFWAFYHAS). Topologically, residues 106–128 (LAPTPELGGCWPPTGITTLDPFE) are mitochondrial intermembrane. The helical transmembrane segment at 129–152 (VPLLNTAVLLASGVTVTWAHHSIM) threads the bilayer. Topologically, residues 153–155 (EGE) are mitochondrial matrix. A helical transmembrane segment spans residues 156–183 (RKQAIHSLTLTILLGFYFTFLQGLEYYD). Over 184–190 (APFTIAD) the chain is Mitochondrial intermembrane. Residues 191–223 (GVYGSTFFVATGFHGLHVIIGSTFLAVCLLRQI) form a helical membrane-spanning segment. The Mitochondrial matrix segment spans residues 224–232 (RYHFTSEHH). A helical membrane pass occupies residues 233 to 256 (FGFEAAAWYWHFVDVVWLFLYISI). The Mitochondrial intermembrane segment spans residues 257–261 (YWWGS).

This sequence belongs to the cytochrome c oxidase subunit 3 family. As to quaternary structure, component of the cytochrome c oxidase (complex IV, CIV), a multisubunit enzyme composed of 14 subunits. The complex is composed of a catalytic core of 3 subunits MT-CO1, MT-CO2 and MT-CO3, encoded in the mitochondrial DNA, and 11 supernumerary subunits COX4I, COX5A, COX5B, COX6A, COX6B, COX6C, COX7A, COX7B, COX7C, COX8 and NDUFA4, which are encoded in the nuclear genome. The complex exists as a monomer or a dimer and forms supercomplexes (SCs) in the inner mitochondrial membrane with NADH-ubiquinone oxidoreductase (complex I, CI) and ubiquinol-cytochrome c oxidoreductase (cytochrome b-c1 complex, complex III, CIII), resulting in different assemblies (supercomplex SCI(1)III(2)IV(1) and megacomplex MCI(2)III(2)IV(2)).

It is found in the mitochondrion inner membrane. The enzyme catalyses 4 Fe(II)-[cytochrome c] + O2 + 8 H(+)(in) = 4 Fe(III)-[cytochrome c] + 2 H2O + 4 H(+)(out). Its function is as follows. Component of the cytochrome c oxidase, the last enzyme in the mitochondrial electron transport chain which drives oxidative phosphorylation. The respiratory chain contains 3 multisubunit complexes succinate dehydrogenase (complex II, CII), ubiquinol-cytochrome c oxidoreductase (cytochrome b-c1 complex, complex III, CIII) and cytochrome c oxidase (complex IV, CIV), that cooperate to transfer electrons derived from NADH and succinate to molecular oxygen, creating an electrochemical gradient over the inner membrane that drives transmembrane transport and the ATP synthase. Cytochrome c oxidase is the component of the respiratory chain that catalyzes the reduction of oxygen to water. Electrons originating from reduced cytochrome c in the intermembrane space (IMS) are transferred via the dinuclear copper A center (CU(A)) of subunit 2 and heme A of subunit 1 to the active site in subunit 1, a binuclear center (BNC) formed by heme A3 and copper B (CU(B)). The BNC reduces molecular oxygen to 2 water molecules using 4 electrons from cytochrome c in the IMS and 4 protons from the mitochondrial matrix. This chain is Cytochrome c oxidase subunit 3 (mt-co3), found in Gadus morhua (Atlantic cod).